Here is a 272-residue protein sequence, read N- to C-terminus: GATA zinc finger domain-containing protein 1 (272 aa).

A GATA-type zinc finger spans residues 9–33; the sequence is CSVCKTTSSSMWKKGPQGEILCHHC. Positions 67-120 are disordered; that stretch reads TFASTSAAPPQSNGGGGGKQSKQEIHRRSARLRNTKYKSAPAAEKKVSTKGKGR. Lysine 167 carries the N6-acetyllysine modification. Lysine 265 is covalently cross-linked (Glycyl lysine isopeptide (Lys-Gly) (interchain with G-Cter in SUMO2)).

The protein localises to the nucleus. In Bos taurus (Bovine), this protein is GATA zinc finger domain-containing protein 1 (GATAD1).